Reading from the N-terminus, the 864-residue chain is Leucine--tRNA ligase (864 aa).

The 'HIGH' region motif lies at 42–52 (PYPSGKLHMGH). The short motif at 624–628 (KMSKS) is the 'KMSKS' region element. Lys627 provides a ligand contact to ATP.

Belongs to the class-I aminoacyl-tRNA synthetase family.

The protein localises to the cytoplasm. The enzyme catalyses tRNA(Leu) + L-leucine + ATP = L-leucyl-tRNA(Leu) + AMP + diphosphate. This chain is Leucine--tRNA ligase, found in Burkholderia multivorans (strain ATCC 17616 / 249).